The chain runs to 268 residues: Probable 1-acyl-sn-glycerol-3-phosphate acyltransferase (268 aa).

The HXXXXD motif signature appears at 92-97 (HKSNLD).

This sequence belongs to the 1-acyl-sn-glycerol-3-phosphate acyltransferase family.

The enzyme catalyses a 1-acyl-sn-glycero-3-phosphate + an acyl-CoA = a 1,2-diacyl-sn-glycero-3-phosphate + CoA. Its pathway is phospholipid metabolism; CDP-diacylglycerol biosynthesis; CDP-diacylglycerol from sn-glycerol 3-phosphate: step 2/3. Its function is as follows. Converts lysophosphatidic acid (LPA) into phosphatidic acid by incorporating acyl moiety at the 2 position. The protein is Probable 1-acyl-sn-glycerol-3-phosphate acyltransferase (plsC) of Mycoplasma genitalium (strain ATCC 33530 / DSM 19775 / NCTC 10195 / G37) (Mycoplasmoides genitalium).